A 157-amino-acid chain; its full sequence is Class-10 pathogenesis-related protein 1 (157 aa).

The protein belongs to the BetVI family. High levels in roots and not detectable in hypocotyls, cotyledons, stems, leaves and flower buds of untreated plants. After induction, high levels are present in the vascular bundles of leaves.

The protein resides in the cytoplasm. The chain is Class-10 pathogenesis-related protein 1 (MSPR10-1) from Medicago sativa (Alfalfa).